Here is a 178-residue protein sequence, read N- to C-terminus: Large ribosomal subunit protein uL6 (178 aa).

The protein belongs to the universal ribosomal protein uL6 family. In terms of assembly, part of the 50S ribosomal subunit.

Its function is as follows. This protein binds to the 23S rRNA, and is important in its secondary structure. It is located near the subunit interface in the base of the L7/L12 stalk, and near the tRNA binding site of the peptidyltransferase center. This is Large ribosomal subunit protein uL6 from Streptococcus equi subsp. zooepidemicus (strain H70).